The primary structure comprises 572 residues: Urease subunit alpha (572 aa).

The Urease domain maps to glycine 132 to tyrosine 572. Residues histidine 137, histidine 139, and lysine 220 each contribute to the Ni(2+) site. The residue at position 220 (lysine 220) is an N6-carboxylysine. Histidine 222 provides a ligand contact to substrate. Residues histidine 249 and histidine 275 each contribute to the Ni(2+) site. Histidine 323 serves as the catalytic Proton donor. Residue aspartate 363 coordinates Ni(2+).

Belongs to the metallo-dependent hydrolases superfamily. Urease alpha subunit family. As to quaternary structure, heterotrimer of UreA (gamma), UreB (beta) and UreC (alpha) subunits. Three heterotrimers associate to form the active enzyme. The cofactor is Ni cation. Carboxylation allows a single lysine to coordinate two nickel ions.

The protein resides in the cytoplasm. It carries out the reaction urea + 2 H2O + H(+) = hydrogencarbonate + 2 NH4(+). It participates in nitrogen metabolism; urea degradation; CO(2) and NH(3) from urea (urease route): step 1/1. The sequence is that of Urease subunit alpha from Bradyrhizobium diazoefficiens (strain JCM 10833 / BCRC 13528 / IAM 13628 / NBRC 14792 / USDA 110).